A 326-amino-acid chain; its full sequence is Cytosolic Fe-S cluster assembly factor NBP35 (326 aa).

The disordered stretch occupies residues 1-38; sequence MTEIANGQQILPPDYTLKEPEPEHCPGPESENAGKGDS. The segment covering 16–26 has biased composition (basic and acidic residues); it reads TLKEPEPEHCP. The [4Fe-4S] cluster site is built by Cys-25, Cys-39, Cys-42, and Cys-48. An ATP-binding site is contributed by 78 to 85; the sequence is GKGGVGKS. [4Fe-4S] cluster contacts are provided by Cys-251 and Cys-254.

Belongs to the Mrp/NBP35 ATP-binding proteins family. NUBP1/NBP35 subfamily. In terms of assembly, heterotetramer of 2 NBP35 and 2 CFD1 chains. It depends on [4Fe-4S] cluster as a cofactor.

The protein localises to the cytoplasm. The protein resides in the nucleus. In terms of biological role, component of the cytosolic iron-sulfur (Fe/S) protein assembly (CIA) machinery. Required for maturation of extramitochondrial Fe-S proteins. The NBP35-CFD1 heterotetramer forms a Fe-S scaffold complex, mediating the de novo assembly of an Fe-S cluster and its transfer to target apoproteins. Required for biogenesis and export of both ribosomal subunits, which may reflect a role in assembly of the Fe/S clusters in RLI1, a protein which performs rRNA processing and ribosome export. This chain is Cytosolic Fe-S cluster assembly factor NBP35, found in Kluyveromyces lactis (strain ATCC 8585 / CBS 2359 / DSM 70799 / NBRC 1267 / NRRL Y-1140 / WM37) (Yeast).